We begin with the raw amino-acid sequence, 467 residues long: 3-isopropylmalate dehydratase large subunit (467 aa).

3 residues coordinate [4Fe-4S] cluster: Cys347, Cys407, and Cys410.

Belongs to the aconitase/IPM isomerase family. LeuC type 1 subfamily. Heterodimer of LeuC and LeuD. [4Fe-4S] cluster is required as a cofactor.

It catalyses the reaction (2R,3S)-3-isopropylmalate = (2S)-2-isopropylmalate. It participates in amino-acid biosynthesis; L-leucine biosynthesis; L-leucine from 3-methyl-2-oxobutanoate: step 2/4. Catalyzes the isomerization between 2-isopropylmalate and 3-isopropylmalate, via the formation of 2-isopropylmaleate. This is 3-isopropylmalate dehydratase large subunit from Crocosphaera subtropica (strain ATCC 51142 / BH68) (Cyanothece sp. (strain ATCC 51142)).